Consider the following 132-residue polypeptide: MAKVVRKKTVRRKKDRKNIERGQAHIQSTFNNSIVTLTDMQGNTIGWSCAGQLGFKGSRKSTPFAAQMCAEAAAKSAMEHGLKTIEVFVKGPGAGREAAIRALQAAGLEVSLIKDVTPIPHNGCRPPKRRRV.

Belongs to the universal ribosomal protein uS11 family. In terms of assembly, part of the 30S ribosomal subunit. Interacts with proteins S7 and S18. Binds to IF-3.

Located on the platform of the 30S subunit, it bridges several disparate RNA helices of the 16S rRNA. Forms part of the Shine-Dalgarno cleft in the 70S ribosome. In Alkaliphilus metalliredigens (strain QYMF), this protein is Small ribosomal subunit protein uS11.